We begin with the raw amino-acid sequence, 132 residues long: U10-hexatoxin-Hi1a (132 aa).

Residues 1–20 (MKGFIVFSLSLCLVFTVCLA) form the signal peptide. Residues 21-30 (EDELMKEAVR) constitute a propeptide that is removed on maturation.

Post-translationally, contains 5 disulfide bonds. As to expression, expressed by the venom gland.

The protein resides in the secreted. Functionally, probable ion channel inhibitor. The polypeptide is U10-hexatoxin-Hi1a (Hadronyche infensa (Fraser island funnel-web spider)).